The primary structure comprises 955 residues: 2-oxoglutarate dehydrogenase E1 component (955 aa).

It belongs to the alpha-ketoglutarate dehydrogenase family. In terms of assembly, homodimer. Part of the 2-oxoglutarate dehydrogenase (OGDH) complex composed of E1 (2-oxoglutarate dehydrogenase), E2 (dihydrolipoamide succinyltransferase) and E3 (dihydrolipoamide dehydrogenase); the complex contains multiple copies of the three enzymatic components (E1, E2 and E3). The cofactor is thiamine diphosphate.

It carries out the reaction N(6)-[(R)-lipoyl]-L-lysyl-[protein] + 2-oxoglutarate + H(+) = N(6)-[(R)-S(8)-succinyldihydrolipoyl]-L-lysyl-[protein] + CO2. E1 component of the 2-oxoglutarate dehydrogenase (OGDH) complex which catalyzes the decarboxylation of 2-oxoglutarate, the first step in the conversion of 2-oxoglutarate to succinyl-CoA and CO(2). This Bacillus cereus (strain ATCC 14579 / DSM 31 / CCUG 7414 / JCM 2152 / NBRC 15305 / NCIMB 9373 / NCTC 2599 / NRRL B-3711) protein is 2-oxoglutarate dehydrogenase E1 component.